We begin with the raw amino-acid sequence, 1017 residues long: Type VI secretion system spike protein VgrG3 (1017 aa).

The active site involves Asp842.

This sequence belongs to the VgrG protein family. Interacts with TsiV3. Interacts with TseL.

The protein localises to the secreted. Functionally, part of the type VI secretion system specialized secretion system, which delivers several virulence factors in both prokaryotic and eukaryotic cells during infection. Forms the spike at the tip of the elongating tube formed by haemolysin co-regulated protein Hcp. Allows the delivery of the TseL antibacterial toxin to target cells where it exerts its toxicity. Additionally, acts directly as an effector and targets the cell wall peptidoglycan layer of prey cells for degradation via its C-terminus. Toxicity is counteracted by a cognate immunity protein TsiV3. The polypeptide is Type VI secretion system spike protein VgrG3 (Vibrio cholerae serotype O1 (strain ATCC 39315 / El Tor Inaba N16961)).